A 369-amino-acid polypeptide reads, in one-letter code: Molybdenum import ATP-binding protein ModC (369 aa).

The region spanning 4–239 (LQLRAVVADR…PRSRFGARIA (236 aa)) is the ABC transporter domain. 31–38 (GPNGAGKS) contacts ATP. The 69-residue stretch at 293-361 (HGSPRNIVGL…VKAQEVALHP (69 aa)) folds into the Mop domain.

It belongs to the ABC transporter superfamily. Molybdate importer (TC 3.A.1.8) family. As to quaternary structure, the complex is composed of two ATP-binding proteins (ModC), two transmembrane proteins (ModB) and a solute-binding protein (ModA).

Its subcellular location is the cell membrane. The enzyme catalyses molybdate(out) + ATP + H2O = molybdate(in) + ADP + phosphate + H(+). Its function is as follows. Part of the ABC transporter complex ModABC involved in molybdenum import. Responsible for energy coupling to the transport system. The chain is Molybdenum import ATP-binding protein ModC from Mycobacterium tuberculosis (strain CDC 1551 / Oshkosh).